The chain runs to 310 residues: tRNA dimethylallyltransferase (310 aa).

10 to 17 (GPTAVGKS) is an ATP binding site. 12-17 (TAVGKS) contacts substrate. Interaction with substrate tRNA regions lie at residues 35-38 (DSAQ), 159-163 (QRIQR), and 274-281 (KRQITWLR).

This sequence belongs to the IPP transferase family. In terms of assembly, monomer. It depends on Mg(2+) as a cofactor.

The catalysed reaction is adenosine(37) in tRNA + dimethylallyl diphosphate = N(6)-dimethylallyladenosine(37) in tRNA + diphosphate. Functionally, catalyzes the transfer of a dimethylallyl group onto the adenine at position 37 in tRNAs that read codons beginning with uridine, leading to the formation of N6-(dimethylallyl)adenosine (i(6)A). The polypeptide is tRNA dimethylallyltransferase (Halorhodospira halophila (strain DSM 244 / SL1) (Ectothiorhodospira halophila (strain DSM 244 / SL1))).